A 246-amino-acid polypeptide reads, in one-letter code: MGKNKQNGESDNKSEKKNQKNGDSSVDKSDKKNQCKEIVLKVYMHCEGCASQVSHCLRGYDGVEHIKTEIGDNKVVVSGKFDDPLKILRRVQKKFSRNAEMISPKHNPKQDQKEPQQKKESAPEIKTAILRMNMHCEGCVHEIKRGIEKIKGIQSVEPDRSKSTVVVRGVMDPPKLVEKIKKKLGKHAELLSQITEKGKDNNKKNNNKKEESDGNKIFSYPPQYSSQHAYPSQIFSDENVHSCSIM.

The segment at Met-1 to Lys-31 is disordered. Residues Cys-35 to Ala-99 enclose the HMA 1 domain. The a metal cation site is built by Cys-46 and Cys-49. The segment at Ser-96–Ala-122 is disordered. Basic and acidic residues predominate over residues Pro-108–Ala-122. An HMA 2 domain is found at Ile-125–Glu-189. The a metal cation site is built by Cys-136 and Cys-139. A disordered region spans residues Leu-191 to Ser-226. The span at Glu-196 to Gly-214 shows a compositional bias: basic and acidic residues. Cys-243 is modified (cysteine methyl ester). Cys-243 carries S-farnesyl cysteine lipidation. Positions Ser-244–Met-246 are cleaved as a propeptide — removed in mature form.

It belongs to the HIPP family.

In terms of biological role, heavy-metal-binding protein. This is Heavy metal-associated isoprenylated plant protein 8 from Arabidopsis thaliana (Mouse-ear cress).